The sequence spans 181 residues: RING-H2 finger protein ATL56 (181 aa).

Residues 1-24 (MPPTNNYRISGEPPSTTPSHPPPK) form a disordered region. Residues 15 to 24 (STTPSHPPPK) are compositionally biased toward pro residues. A helical membrane pass occupies residues 32 to 52 (LFLVGVIMFSIFFLFLVLIGI). The segment at 110 to 152 (CVVCFDGFRQGQWCRNLPGCGHVFHRKCVDTWLLKASTCPICR) adopts an RING-type; atypical zinc-finger fold.

The protein belongs to the RING-type zinc finger family. ATL subfamily.

Its subcellular location is the membrane. It catalyses the reaction S-ubiquitinyl-[E2 ubiquitin-conjugating enzyme]-L-cysteine + [acceptor protein]-L-lysine = [E2 ubiquitin-conjugating enzyme]-L-cysteine + N(6)-ubiquitinyl-[acceptor protein]-L-lysine.. Its pathway is protein modification; protein ubiquitination. This chain is RING-H2 finger protein ATL56 (ATL56), found in Arabidopsis thaliana (Mouse-ear cress).